The primary structure comprises 441 residues: Ribosomal protein uS12 methylthiotransferase RimO (441 aa).

The MTTase N-terminal domain occupies Pro7–Pro117. Residues Cys16, Cys52, Cys81, Cys148, Cys152, and Cys155 each contribute to the [4Fe-4S] cluster site. A Radical SAM core domain is found at Leu134–Arg371. The 67-residue stretch at Lys374 to Gly440 folds into the TRAM domain.

The protein belongs to the methylthiotransferase family. RimO subfamily. Requires [4Fe-4S] cluster as cofactor.

It is found in the cytoplasm. It catalyses the reaction L-aspartate(89)-[ribosomal protein uS12]-hydrogen + (sulfur carrier)-SH + AH2 + 2 S-adenosyl-L-methionine = 3-methylsulfanyl-L-aspartate(89)-[ribosomal protein uS12]-hydrogen + (sulfur carrier)-H + 5'-deoxyadenosine + L-methionine + A + S-adenosyl-L-homocysteine + 2 H(+). In terms of biological role, catalyzes the methylthiolation of an aspartic acid residue of ribosomal protein uS12. The sequence is that of Ribosomal protein uS12 methylthiotransferase RimO from Rhodopseudomonas palustris (strain BisB5).